A 297-amino-acid chain; its full sequence is Acetylglutamate kinase (297 aa).

Substrate-binding positions include Gly-64 to Gly-65, Arg-86, and Asn-190.

The protein belongs to the acetylglutamate kinase family. ArgB subfamily.

The protein resides in the cytoplasm. It catalyses the reaction N-acetyl-L-glutamate + ATP = N-acetyl-L-glutamyl 5-phosphate + ADP. It functions in the pathway amino-acid biosynthesis; L-arginine biosynthesis; N(2)-acetyl-L-ornithine from L-glutamate: step 2/4. In terms of biological role, catalyzes the ATP-dependent phosphorylation of N-acetyl-L-glutamate. This Solidesulfovibrio magneticus (strain ATCC 700980 / DSM 13731 / RS-1) (Desulfovibrio magneticus) protein is Acetylglutamate kinase.